Consider the following 227-residue polypeptide: Phosphoglycolate phosphatase (227 aa).

Asp8 serves as the catalytic Nucleophile. Residues Asp8 and Asp10 each contribute to the Mg(2+) site. A substrate-binding site is contributed by Lys152. 2 residues coordinate Mg(2+): Asp175 and Asp179.

It belongs to the archaeal SPP-like hydrolase family. Mg(2+) serves as cofactor.

It catalyses the reaction 2-phosphoglycolate + H2O = glycolate + phosphate. Catalyzes the dephosphorylation of 2-phosphoglycolate. The sequence is that of Phosphoglycolate phosphatase from Halorubrum lacusprofundi (strain ATCC 49239 / DSM 5036 / JCM 8891 / ACAM 34).